Consider the following 201-residue polypeptide: Orotate phosphoribosyltransferase (201 aa).

Residue 113 to 121 (EDIITTGKS) participates in 5-phospho-alpha-D-ribose 1-diphosphate binding. Orotate contacts are provided by Thr-117 and Arg-145.

Belongs to the purine/pyrimidine phosphoribosyltransferase family. PyrE subfamily. Homodimer. Mg(2+) is required as a cofactor.

It carries out the reaction orotidine 5'-phosphate + diphosphate = orotate + 5-phospho-alpha-D-ribose 1-diphosphate. It functions in the pathway pyrimidine metabolism; UMP biosynthesis via de novo pathway; UMP from orotate: step 1/2. Catalyzes the transfer of a ribosyl phosphate group from 5-phosphoribose 1-diphosphate to orotate, leading to the formation of orotidine monophosphate (OMP). This Helicobacter pylori (strain G27) protein is Orotate phosphoribosyltransferase.